Here is a 203-residue protein sequence, read N- to C-terminus: Ribosomal RNA small subunit methyltransferase G (203 aa).

S-adenosyl-L-methionine-binding positions include Gly-73, Leu-78, 124–125 (VE), and Arg-138.

It belongs to the methyltransferase superfamily. RNA methyltransferase RsmG family.

It is found in the cytoplasm. It catalyses the reaction guanosine(527) in 16S rRNA + S-adenosyl-L-methionine = N(7)-methylguanosine(527) in 16S rRNA + S-adenosyl-L-homocysteine. Functionally, specifically methylates the N7 position of guanine in position 527 of 16S rRNA. The chain is Ribosomal RNA small subunit methyltransferase G from Glaesserella parasuis serovar 5 (strain SH0165) (Haemophilus parasuis).